The primary structure comprises 406 residues: Tryptophan synthase beta chain (406 aa).

Position 99 is an N6-(pyridoxal phosphate)lysine (Lys-99).

The protein belongs to the TrpB family. Tetramer of two alpha and two beta chains. Pyridoxal 5'-phosphate is required as a cofactor.

It carries out the reaction (1S,2R)-1-C-(indol-3-yl)glycerol 3-phosphate + L-serine = D-glyceraldehyde 3-phosphate + L-tryptophan + H2O. It participates in amino-acid biosynthesis; L-tryptophan biosynthesis; L-tryptophan from chorismate: step 5/5. Functionally, the beta subunit is responsible for the synthesis of L-tryptophan from indole and L-serine. This is Tryptophan synthase beta chain (trpB) from Caulobacter vibrioides (strain ATCC 19089 / CIP 103742 / CB 15) (Caulobacter crescentus).